The chain runs to 64 residues: Purotoxin-2 (64 aa).

The knottin domain stretch occupies residues 1–44; sequence AKACTPLLHDCSHDRHSCCRGDMFKYVCDCFYPEGEDKTEVCSC. 4 disulfide bridges follow: Cys4-Cys19, Cys11-Cys28, Cys18-Cys44, and Cys30-Cys42. Residues 45 to 64 form a linear cationic cytotoxin domain region; the sequence is QQPKSHKIAEKIIDKAKTTL. Leu64 is subject to Leucine amide.

It belongs to the neurotoxin 19 (CSTX) family. 05 (U4-Lctx) subfamily. Post-translationally, amidation at Leu-64 is not mandatory for activity on P2RX3. As to expression, expressed by the venom gland.

The protein localises to the secreted. In terms of biological role, enhances the high-affinity desensitization of human P2RX3 purinoceptors. At 50 nM, the toxin decreases the IC(50) for ambient ATP from 2.67 nM to 0.77 nM in human P2RX3. This is Purotoxin-2 from Alopecosa marikovskyi (Wolf spider).